The chain runs to 412 residues: Serine hydroxymethyltransferase (412 aa).

(6S)-5,6,7,8-tetrahydrofolate is bound by residues L117 and 121-123 (GHL). The residue at position 226 (K226) is an N6-(pyridoxal phosphate)lysine. (6S)-5,6,7,8-tetrahydrofolate is bound at residue 349 to 351 (SPF).

This sequence belongs to the SHMT family. Homodimer. The cofactor is pyridoxal 5'-phosphate.

It is found in the cytoplasm. The catalysed reaction is (6R)-5,10-methylene-5,6,7,8-tetrahydrofolate + glycine + H2O = (6S)-5,6,7,8-tetrahydrofolate + L-serine. It participates in one-carbon metabolism; tetrahydrofolate interconversion. It functions in the pathway amino-acid biosynthesis; glycine biosynthesis; glycine from L-serine: step 1/1. Functionally, catalyzes the reversible interconversion of serine and glycine with tetrahydrofolate (THF) serving as the one-carbon carrier. This reaction serves as the major source of one-carbon groups required for the biosynthesis of purines, thymidylate, methionine, and other important biomolecules. Also exhibits THF-independent aldolase activity toward beta-hydroxyamino acids, producing glycine and aldehydes, via a retro-aldol mechanism. The sequence is that of Serine hydroxymethyltransferase from Halothermothrix orenii (strain H 168 / OCM 544 / DSM 9562).